Reading from the N-terminus, the 169-residue chain is Large ribosomal subunit protein uL10 (169 aa).

This sequence belongs to the universal ribosomal protein uL10 family. Part of the ribosomal stalk of the 50S ribosomal subunit. The N-terminus interacts with L11 and the large rRNA to form the base of the stalk. The C-terminus forms an elongated spine to which L12 dimers bind in a sequential fashion forming a multimeric L10(L12)X complex.

In terms of biological role, forms part of the ribosomal stalk, playing a central role in the interaction of the ribosome with GTP-bound translation factors. The chain is Large ribosomal subunit protein uL10 from Rickettsia peacockii (strain Rustic).